A 422-amino-acid polypeptide reads, in one-letter code: Histidine--tRNA ligase (422 aa).

It belongs to the class-II aminoacyl-tRNA synthetase family. As to quaternary structure, homodimer.

It is found in the cytoplasm. It catalyses the reaction tRNA(His) + L-histidine + ATP = L-histidyl-tRNA(His) + AMP + diphosphate + H(+). The sequence is that of Histidine--tRNA ligase from Aliivibrio fischeri (strain ATCC 700601 / ES114) (Vibrio fischeri).